Here is a 610-residue protein sequence, read N- to C-terminus: Menin (610 aa).

Positions 214–390 (GVAERSWLYL…SLLEAGEERP (177 aa)) are interaction with FANCD2. Residues 462 to 552 (AEAAEAEELW…SPPPEGPVLT (91 aa)) are disordered. A compositionally biased stretch (basic and acidic residues) spans 484–500 (RRESKPEEPPPPKKPAL). Ser-487 and Ser-543 each carry phosphoserine. Pro residues predominate over residues 537–548 (APAPAASPPPEG). Thr-594 carries the post-translational modification Phosphothreonine.

Component of the MLL-HCF complex, at least composed of KMT2A/MLL1, MEN1, ASH2L, RBBP5, DPY30, WDR5, HCFC1 and HCFC2. Component of the menin-associated histone methyltransferase complex, at least composed of KMT2B/MLL4, MEN1, ASH2L, RBBP5, DPY30 and WDR5. Interacts with POLR2B. Interacts with POLR2A phosphorylated at 'Ser-5', but not with the unphosphorylated, nor 'Ser-2' phosphorylated POLR2A forms. Interacts with FANCD2 and DBF4. Interacts with SMAD3, but not with SMAD2, nor SMAD4. Directly interacts with NFKB1, NFKB2 and RELA. Interacts with JUND (via MBM motif); inhibits the interaction of JUND with MAPK10 and the phosphorylation of JUND by MAP kinases MAPK8 and MAPK10. Interacts with KMT2A (via MBM motif). The KMT2A-MEN1 complex interacts with PSIP1 with a greater affinity as MEN1 enhances interaction of KMT2A with PSIP1.

It is found in the nucleus. Functionally, essential component of a MLL/SET1 histone methyltransferase (HMT) complex, a complex that specifically methylates 'Lys-4' of histone H3 (H3K4). Functions as a transcriptional regulator. Binds to the TERT promoter and represses telomerase expression. Plays a role in TGFB1-mediated inhibition of cell-proliferation, possibly regulating SMAD3 transcriptional activity. Represses JUND-mediated transcriptional activation on AP1 sites, as well as that mediated by NFKB subunit RELA. Positively regulates HOXC8 and HOXC6 gene expression. May be involved in normal hematopoiesis through the activation of HOXA9 expression. May be involved in DNA repair. This chain is Menin (MEN1), found in Canis lupus familiaris (Dog).